A 342-amino-acid chain; its full sequence is S-adenosylmethionine:tRNA ribosyltransferase-isomerase (342 aa).

It belongs to the QueA family. As to quaternary structure, monomer.

Its subcellular location is the cytoplasm. It catalyses the reaction 7-aminomethyl-7-carbaguanosine(34) in tRNA + S-adenosyl-L-methionine = epoxyqueuosine(34) in tRNA + adenine + L-methionine + 2 H(+). Its pathway is tRNA modification; tRNA-queuosine biosynthesis. Its function is as follows. Transfers and isomerizes the ribose moiety from AdoMet to the 7-aminomethyl group of 7-deazaguanine (preQ1-tRNA) to give epoxyqueuosine (oQ-tRNA). The sequence is that of S-adenosylmethionine:tRNA ribosyltransferase-isomerase from Streptococcus pyogenes serotype M2 (strain MGAS10270).